Here is a 325-residue protein sequence, read N- to C-terminus: LIM and senescent cell antigen-like-containing domain protein 1 (325 aa).

Ala2 carries the N-acetylalanine modification. LIM zinc-binding domains lie at 10–62, 71–121, 135–184, 193–243, and 252–303; these read CERC…CEHD, CHQC…CRPC, CQKC…CLPC, CGAC…CETH, and CFHC…CKKC.

As to quaternary structure, component of the heterotrimeric IPP (ILK-PINCH-PARVIN) complex composed of ILK, LIMS1/PINCH and PARVA; the complex binds to F-actin via the C-terminal tail of LIMS1 and the N-terminal region of PARVA, promoting F-actin filament bundling. Formation of the IPP complex is dependent on protein kinase C and precedes integrin-mediated cell adhesion and spreading. Competes with LIMS2 for interaction with ILK. Interacts (via LIM zinc-binding 5) with TGFB1I1. Interacts with SH3/SH2 adapter NCK2, thereby linking the complex to cell surface receptors. In terms of tissue distribution, expressed in most tissues except in the brain.

The protein localises to the cell junction. Its subcellular location is the focal adhesion. It localises to the cell membrane. Its function is as follows. Within the IPP (ILK-PINCH-PARVIN) complex, binds to F-actin, promoting F-actin bundling, a process required to generate force for actin cytoskeleton reorganization and subsequent dynamic cell adhesion events such as cell spreading and migration. The polypeptide is LIM and senescent cell antigen-like-containing domain protein 1 (LIMS1) (Homo sapiens (Human)).